Consider the following 118-residue polypeptide: NADH-ubiquinone oxidoreductase chain 3 (118 aa).

The next 2 helical transmembrane spans lie at 4-24 (FAPI…PLGV) and 87-107 (IDPF…IGSL).

The protein belongs to the complex I subunit 3 family.

It localises to the mitochondrion membrane. It catalyses the reaction a ubiquinone + NADH + 5 H(+)(in) = a ubiquinol + NAD(+) + 4 H(+)(out). Core subunit of the mitochondrial membrane respiratory chain NADH dehydrogenase (Complex I) that is believed to belong to the minimal assembly required for catalysis. Complex I functions in the transfer of electrons from NADH to the respiratory chain. The immediate electron acceptor for the enzyme is believed to be ubiquinone. The polypeptide is NADH-ubiquinone oxidoreductase chain 3 (ND3) (Panax ginseng (Korean ginseng)).